Reading from the N-terminus, the 775-residue chain is Endothelin-converting enzyme-like 1 (775 aa).

Residues M1 to C61 are Cytoplasmic-facing. The tract at residues C23–G51 is disordered. The segment covering S32 to G51 has biased composition (low complexity). Residues L62–L82 traverse the membrane as a helical; Signal-anchor for type II membrane protein segment. At K83–W775 the chain is on the lumenal side. The 677-residue stretch at G99–W775 folds into the Peptidase M13 domain. Cystine bridges form between C124–C760, C132–C720, C188–C441, and C649–C772. N255 and N322 each carry an N-linked (GlcNAc...) asparagine glycan. H612 provides a ligand contact to Zn(2+). E613 is an active-site residue. H616 is a binding site for Zn(2+). N-linked (GlcNAc...) asparagine glycosylation is present at N656. E672 serves as a coordination point for Zn(2+). Catalysis depends on D676, which acts as the Proton donor.

This sequence belongs to the peptidase M13 family. Requires Zn(2+) as cofactor. Highly expressed in the CNS, in particular in neurons of the caudate putamen, diagonal band, the paraventricular nucleus of the thalamus, part of the hypothalamus, in cranial motor nuclei, inferior olive, and substantia gelatinosa of the spinal tract trigeminal nucleus. Not detected in cerebral cortex, hippocampus and cerebellum.

It is found in the membrane. Its function is as follows. May contribute to the degradation of peptide hormones and be involved in the inactivation of neuronal peptides. Cleaves the synthetic substrate Z-Gly-Gly-Leu-pNA and releases pNA. May protect against C2-ceramide-induced apoptosis. The protein is Endothelin-converting enzyme-like 1 (Ecel1) of Rattus norvegicus (Rat).